Consider the following 688-residue polypeptide: Elongation factor G (688 aa).

One can recognise a tr-type G domain in the interval 8-282; it reads EKTRNIGIIA…AVVDYLPAPC (275 aa). GTP contacts are provided by residues 17–24, 81–85, and 135–138; these read AHIDAGKT, DTPGH, and NKMD.

Belongs to the TRAFAC class translation factor GTPase superfamily. Classic translation factor GTPase family. EF-G/EF-2 subfamily.

Its subcellular location is the cytoplasm. In terms of biological role, catalyzes the GTP-dependent ribosomal translocation step during translation elongation. During this step, the ribosome changes from the pre-translocational (PRE) to the post-translocational (POST) state as the newly formed A-site-bound peptidyl-tRNA and P-site-bound deacylated tRNA move to the P and E sites, respectively. Catalyzes the coordinated movement of the two tRNA molecules, the mRNA and conformational changes in the ribosome. The polypeptide is Elongation factor G (Aster yellows witches'-broom phytoplasma (strain AYWB)).